Reading from the N-terminus, the 465-residue chain is 23S rRNA (uracil(1939)-C(5))-methyltransferase RlmD (465 aa).

Positions 1–22 (MSEAVPTSARKSKNAPVAPGPA) are disordered. The TRAM domain occupies 16–80 (PVAPGPAPVL…PSYEQATVVD (65 aa)). Cys-93, Cys-99, Cys-102, and Cys-181 together coordinate [4Fe-4S] cluster. Residues Gln-289, Phe-318, Asn-323, Glu-339, Asn-367, and Asp-388 each contribute to the S-adenosyl-L-methionine site. Cys-421 functions as the Nucleophile in the catalytic mechanism.

Belongs to the class I-like SAM-binding methyltransferase superfamily. RNA M5U methyltransferase family. RlmD subfamily.

The catalysed reaction is uridine(1939) in 23S rRNA + S-adenosyl-L-methionine = 5-methyluridine(1939) in 23S rRNA + S-adenosyl-L-homocysteine + H(+). Its function is as follows. Catalyzes the formation of 5-methyl-uridine at position 1939 (m5U1939) in 23S rRNA. This Burkholderia ambifaria (strain ATCC BAA-244 / DSM 16087 / CCUG 44356 / LMG 19182 / AMMD) (Burkholderia cepacia (strain AMMD)) protein is 23S rRNA (uracil(1939)-C(5))-methyltransferase RlmD.